The primary structure comprises 274 residues: Coiled-coil domain-containing protein 28A (274 aa).

Residues 121–166 form a disordered region; sequence VSKSTGFSNPASQSTSQRPKLKRVMKEKTKPQGGEGKGAQSTPIQH. The segment covering 122–138 has biased composition (polar residues); it reads SKSTGFSNPASQSTSQR. Residues 234–263 adopt a coiled-coil conformation; it reads KRKTASDSNLDRLLSDLEELNSSIQKLHLA.

The polypeptide is Coiled-coil domain-containing protein 28A (CCDC28A) (Homo sapiens (Human)).